We begin with the raw amino-acid sequence, 172 residues long: Translationally-controlled tumor protein homolog (172 aa).

In terms of domain architecture, TCTP spans 1–172 (MIIFKDLLTG…FKHGLDEEKV (172 aa)).

The protein belongs to the TCTP family. Expressed by the venom gland.

It localises to the secreted. In terms of biological role, venom protein that causes edema, enhances vascular permeability and is likely related to the inflammatory activity of the venom. The protein is Translationally-controlled tumor protein homolog of Loxosceles intermedia (Brown spider).